The following is a 758-amino-acid chain: Solute carrier family 26 member 6 (758 aa).

The Cytoplasmic segment spans residues Met-1–Ala-117. Residues Gly-118–Phe-138 form a helical membrane-spanning segment. The Extracellular portion of the chain corresponds to Gly-139–Thr-187. Asn-174 carries N-linked (GlcNAc) asparagine glycosylation. A helical transmembrane segment spans residues Leu-188 to Val-208. Topologically, residues Thr-209–Thr-263 are cytoplasmic. Residues Val-264 to Leu-284 traverse the membrane as a helical segment. At Asn-285 to Leu-292 the chain is on the extracellular side. A helical membrane pass occupies residues Pro-293–Val-313. The Cytoplasmic segment spans residues Lys-314–Glu-340. The chain crosses the membrane as a helical span at residues Leu-341–Ile-361. Residues Ser-362–Glu-380 are Extracellular-facing. Residues Leu-381 to Cys-401 traverse the membrane as a helical segment. Topologically, residues Ser-402–Gln-417 are cytoplasmic. Residues Val-418–Phe-438 traverse the membrane as a helical segment. Residues Arg-439–Thr-485 lie on the Extracellular side of the membrane. A helical membrane pass occupies residues Ile-486–Val-506. Over Val-507–Leu-758 the chain is Cytoplasmic. An STAS domain is found at Glu-531–Ala-741. Residues Glu-585–Ser-608 are disordered. Ser-751 is subject to Phosphoserine.

As to quaternary structure, interacts (via C-terminal domain) with PDZK1 (via C-terminal PDZ domain); the interaction induces chloride and oxalate exchange transport. Interacts with CFTR, SLC26A3 and NHERF1. Interacts with AHCYL1; the interaction increases SLC26A6 activity. Post-translationally, N-glycosylated. Glycosylation at Asn-174 positively regulates its chloride oxalate exchanger activity. In terms of tissue distribution, expressed in kidney (at protein level). Expressed in spermatogenic cells. Expressed in intestine, kidney, testis, brain, muscle, heart, and stomach. Expressed in the submandibular and sublingual salivary glands. Highly expressed in stomach, kidney, heart and small intestine, low in the lung, liver, testis, brain, skeletal muscle and colon. As to expression, expressed in the heart.

It is found in the cell membrane. The protein localises to the apical cell membrane. Its subcellular location is the cytoplasmic vesicle membrane. It localises to the microsome. The catalysed reaction is 2 hydrogencarbonate(in) + chloride(out) = 2 hydrogencarbonate(out) + chloride(in). It catalyses the reaction oxalate(in) + chloride(out) = oxalate(out) + chloride(in). The enzyme catalyses oxalate(in) + formate(out) = oxalate(out) + formate(in). It carries out the reaction oxalate(in) + sulfate(out) = oxalate(out) + sulfate(in). The catalysed reaction is formate(in) + chloride(out) = formate(out) + chloride(in). It catalyses the reaction sulfate(in) = sulfate(out). With respect to regulation, apical membrane chloride-bicarbonate exchange activity of the pancreatic duct is inhibited by 4,4'-diisothiocyanatostilbene-2,2'-disulfonic acid (DIDS). Oxalate secretion in the duodenum and chloride-formate exchange activity is inhibited by DIDS. Chloride-formate exchange activity and transcellular sulfate absorption is inhibited by 4,4'-diisothiocyanatostilbene-2,2'-disulfonic acid (DIDS). Functionally, apical membrane anion-exchanger with wide epithelial distribution that plays a role as a component of the pH buffering system for maintaining acid-base homeostasis. Acts as a versatile DIDS-sensitive inorganic and organic anion transporter that mediates the uptake of monovalent anions like chloride, bicarbonate, formate and hydroxyl ion and divalent anions like sulfate and oxalate. Functions in multiple exchange modes involving pairs of these anions, which include chloride-bicarbonate, chloride-oxalate, oxalate-formate, oxalate-sulfate and chloride-formate exchange. Apical membrane chloride-bicarbonate exchanger that mediates luminal chloride absorption and bicarbonate secretion by the small intestinal brush border membrane and contributes to intracellular pH regulation in the duodenal upper villous epithelium during proton-coupled peptide absorption, possibly by providing a bicarbonate import pathway. Its association with carbonic anhydrase CA2 forms a bicarbonate transport metabolon; hence maximizes the local concentration of bicarbonate at the transporter site. Also mediates intestinal chloride absorption and oxalate secretion, thereby preventing hyperoxaluria and calcium oxalate urolithiasis. Transepithelial oxalate secretion, chloride-formate, chloride-oxalate and chloride-bicarbonate transport activities in the duodenum are inhibited by PKC activation in a calcium-independent manner. The apical membrane chloride-bicarbonate exchanger also provides a major route for fluid and bicarbonate secretion into the proximal tubules of the kidney as well as into the proximal part of the interlobular pancreatic ductal tree, where it mediates electrogenic chloride-bicarbonate exchange with a chloride-bicarbonate stoichiometry of 1:2, and hence will dilute and alkalinize protein-rich acinar secretion. Also mediates the transcellular sulfate absorption and oxalate secretion across the apical membrane in the duodenum and the formate ion efflux at the apical brush border of cells in the proximal tubules of kidney. Plays a role in sperm capacitation by increasing intracellular pH. Mediates electrogenic chloride-bicarbonate exchange with a chloride-bicarbonate stoichiometry of 1:2. Also mediates exchange of chloride-formate and chloride-oxalate ions. Mediates transcellular sulfate absorption. The sequence is that of Solute carrier family 26 member 6 from Mus musculus (Mouse).